Consider the following 125-residue polypeptide: uncharacterized protein (125 aa).

The next 4 helical transmembrane spans lie at 9–29 (IANA…TLTG), 33–53 (GEKT…NMVV), 56–76 (IVQV…TLVV), and 100–120 (FWTA…LNAF).

It is found in the cell membrane. This is an uncharacterized protein from Streptomyces coelicolor (strain ATCC BAA-471 / A3(2) / M145).